Here is a 309-residue protein sequence, read N- to C-terminus: UDP-N-acetylenolpyruvoylglucosamine reductase (309 aa).

The 164-residue stretch at 25-188 folds into the FAD-binding PCMH-type domain; sequence RVGGPADWLF…TSVTLQGNRE (164 aa). The active site involves Arg-168. The segment at 202–231 is disordered; the sequence is AKRDATQPTKALTAGSTFRNPAGFSSTGQA. Polar residues predominate over residues 207–231; sequence TQPTKALTAGSTFRNPAGFSSTGQA. Ser-217 functions as the Proton donor in the catalytic mechanism. Glu-299 is a catalytic residue.

Belongs to the MurB family. The cofactor is FAD.

It localises to the cytoplasm. The enzyme catalyses UDP-N-acetyl-alpha-D-muramate + NADP(+) = UDP-N-acetyl-3-O-(1-carboxyvinyl)-alpha-D-glucosamine + NADPH + H(+). The protein operates within cell wall biogenesis; peptidoglycan biosynthesis. In terms of biological role, cell wall formation. This is UDP-N-acetylenolpyruvoylglucosamine reductase from Jannaschia sp. (strain CCS1).